A 196-amino-acid chain; its full sequence is uncharacterized protein (196 aa).

Residues 58 to 163 (HKFFDAIKDS…IILPNNYHKN (106 aa)) enclose the Bro-N domain.

This is an uncharacterized protein from Acanthamoeba polyphaga mimivirus (APMV).